We begin with the raw amino-acid sequence, 128 residues long: Large ribosomal subunit protein bL12c (128 aa).

The interval 103-128 (QEGLGKDAAEDAKKQIEDAGGKVSLT) is disordered. Over residues 106–122 (LGKDAAEDAKKQIEDAG) the composition is skewed to basic and acidic residues.

Belongs to the bacterial ribosomal protein bL12 family. As to quaternary structure, homodimer. Part of the ribosomal stalk of the 50S ribosomal subunit. Forms a multimeric L10(L12)X complex, where L10 forms an elongated spine to which 2 to 4 L12 dimers bind in a sequential fashion. Binds GTP-bound translation factors.

The protein resides in the plastid. The protein localises to the chloroplast. In terms of biological role, forms part of the ribosomal stalk which helps the ribosome interact with GTP-bound translation factors. Is thus essential for accurate translation. The polypeptide is Large ribosomal subunit protein bL12c (Thalassiosira pseudonana (Marine diatom)).